Consider the following 496-residue polypeptide: Probable cytosol aminopeptidase (496 aa).

Mn(2+) contacts are provided by lysine 258 and aspartate 263. Lysine 270 is an active-site residue. Residues aspartate 281, aspartate 340, and glutamate 342 each coordinate Mn(2+). Residue arginine 344 is part of the active site.

The protein belongs to the peptidase M17 family. Mn(2+) is required as a cofactor.

The protein localises to the cytoplasm. The enzyme catalyses Release of an N-terminal amino acid, Xaa-|-Yaa-, in which Xaa is preferably Leu, but may be other amino acids including Pro although not Arg or Lys, and Yaa may be Pro. Amino acid amides and methyl esters are also readily hydrolyzed, but rates on arylamides are exceedingly low.. It catalyses the reaction Release of an N-terminal amino acid, preferentially leucine, but not glutamic or aspartic acids.. In terms of biological role, presumably involved in the processing and regular turnover of intracellular proteins. Catalyzes the removal of unsubstituted N-terminal amino acids from various peptides. The sequence is that of Probable cytosol aminopeptidase from Helicobacter pylori (strain P12).